Reading from the N-terminus, the 490-residue chain is Putative alanine aminotransferase (490 aa).

Ala157, Ser158, Tyr183, Asn239, and Ser308 together coordinate pyridoxal 5'-phosphate. An N6-(pyridoxal phosphate)lysine modification is found at Lys311. Arg320 provides a ligand contact to pyridoxal 5'-phosphate.

It belongs to the class-I pyridoxal-phosphate-dependent aminotransferase family. Alanine aminotransferase subfamily. In terms of assembly, homodimer. The cofactor is pyridoxal 5'-phosphate.

It is found in the cytoplasm. The protein resides in the mitochondrion. The catalysed reaction is L-alanine + 2-oxoglutarate = pyruvate + L-glutamate. It participates in amino-acid degradation; L-alanine degradation via transaminase pathway; pyruvate from L-alanine: step 1/1. Its function is as follows. Alanine aminotransferase involved in both alanine biosynthesis and utilization. In Schizosaccharomyces pombe (strain 972 / ATCC 24843) (Fission yeast), this protein is Putative alanine aminotransferase (alt1).